The primary structure comprises 186 residues: Homeobox expressed in ES cells 1 (186 aa).

The segment at residues 109 to 168 is a DNA-binding region (homeobox); it reads GRRPRTAFTRSQIEILENVFRVNSYPGIDIREELAGKLALDEDRIQIWFQNRRAKLKRSH.

This sequence belongs to the ANF homeobox family. In terms of assembly, interacts (via N-terminus) with zyx.

Its subcellular location is the nucleus. Its function is as follows. Regulates the earliest stages of development of the anterior neural plate. Plays a role in forebrain development by inhibiting the expression of otx2 and pax6 in the rostral region of the anterior neural plate. Necessary for both neural differentiation and neural patterning. Controls Spemann organizer development. May act as a transcriptional repressor. The chain is Homeobox expressed in ES cells 1 from Xenopus tropicalis (Western clawed frog).